The sequence spans 32 residues: Zinc metalloproteinase carinactivase-1 catalytic subunit (32 aa).

The 23-residue stretch at 10-32 (FIKLVIVVDHSMVXKXNNDLIAI) folds into the Peptidase M12B domain.

It belongs to the venom metalloproteinase (M12B) family. P-III subfamily. P-IIId sub-subfamily. Heterodimer of a metalloproteinase subunit and a regulatory subunit comprising two disulfide-linked lectins (14 kDa and 17 kDa chains) (AC Q9PRP7 and AC Q9PRP8). The cofactor is Zn(2+). Expressed by the venom gland.

The protein resides in the secreted. Functionally, calcium-dependent prothrombin (F2) activator. This protein may activate prothrombin via recognition by the regulatory subunit of the calcium ion bound conformation of its gamma-carboxyglutamic acid (GLA) domain, and the subsequent conversion of prothrombin to active thrombin is catalyzed by the catalytic subunit. This chain is Zinc metalloproteinase carinactivase-1 catalytic subunit, found in Echis carinatus (Saw-scaled viper).